Consider the following 253-residue polypeptide: Chloride intracellular channel protein 4 (253 aa).

Alanine 2 carries the post-translational modification N-acetylalanine. The interval 2–101 (ALSMPLNGLK…EEFLEEVLCP (100 aa)) is required for insertion into the membrane. Serine 4 is subject to Phosphoserine. Lysine 24 bears the N6-acetyllysine mark. A helical transmembrane segment spans residues 37–57 (FSQRLFMILWLKGVVFSVSTV). The 164-residue stretch at 81–244 (NSEVKTDVNK…PSDKEVEIAY (164 aa)) folds into the GST C-terminal domain. Lysine 130 carries the N6-acetyllysine modification. Serine 132, serine 167, and serine 236 each carry phosphoserine. Tyrosine 244 bears the Phosphotyrosine mark.

The protein belongs to the chloride channel CLIC family. In terms of assembly, monomer. Interacts with HRH3.

The protein resides in the cytoplasm. Its subcellular location is the cytoskeleton. The protein localises to the microtubule organizing center. It is found in the centrosome. It localises to the cytoplasmic vesicle membrane. The protein resides in the nucleus. Its subcellular location is the cell membrane. The protein localises to the mitochondrion. It is found in the cell junction. It catalyses the reaction chloride(in) = chloride(out). The catalysed reaction is thiocyanate(in) = thiocyanate(out). It carries out the reaction nitrate(in) = nitrate(out). The enzyme catalyses iodide(out) = iodide(in). It catalyses the reaction bromide(in) = bromide(out). The catalysed reaction is fluoride(in) = fluoride(out). It carries out the reaction choline(out) = choline(in). In the soluble state, catalyzes glutaredoxin-like thiol disulfide exchange reactions with reduced glutathione as electron donor. Can insert into membranes and form voltage-dependent multi-ion conductive channels. Membrane insertion seems to be redox-regulated and may occur only under oxidizing conditions. Has alternate cellular functions like a potential role in angiogenesis or in maintaining apical-basolateral membrane polarity during mitosis and cytokinesis. Could also promote endothelial cell proliferation and regulate endothelial morphogenesis (tubulogenesis). Promotes cell-surface expression of HRH3. The polypeptide is Chloride intracellular channel protein 4 (CLIC4) (Pongo abelii (Sumatran orangutan)).